Here is a 445-residue protein sequence, read N- to C-terminus: Glutamyl-tRNA(Gln) amidotransferase subunit D (445 aa).

Positions Ser93–Asn425 constitute an Asparaginase/glutaminase domain. Active-site residues include Thr103, Thr179, Asp180, and Lys258.

This sequence belongs to the asparaginase 1 family. GatD subfamily. In terms of assembly, heterodimer of GatD and GatE.

It catalyses the reaction L-glutamyl-tRNA(Gln) + L-glutamine + ATP + H2O = L-glutaminyl-tRNA(Gln) + L-glutamate + ADP + phosphate + H(+). Functionally, allows the formation of correctly charged Gln-tRNA(Gln) through the transamidation of misacylated Glu-tRNA(Gln) in organisms which lack glutaminyl-tRNA synthetase. The reaction takes place in the presence of glutamine and ATP through an activated gamma-phospho-Glu-tRNA(Gln). The GatDE system is specific for glutamate and does not act on aspartate. The protein is Glutamyl-tRNA(Gln) amidotransferase subunit D of Saccharolobus islandicus (strain L.S.2.15 / Lassen #1) (Sulfolobus islandicus).